A 461-amino-acid polypeptide reads, in one-letter code: Asparagine--tRNA ligase (461 aa).

Belongs to the class-II aminoacyl-tRNA synthetase family. In terms of assembly, homodimer.

The protein localises to the cytoplasm. It carries out the reaction tRNA(Asn) + L-asparagine + ATP = L-asparaginyl-tRNA(Asn) + AMP + diphosphate + H(+). This chain is Asparagine--tRNA ligase, found in Oleidesulfovibrio alaskensis (strain ATCC BAA-1058 / DSM 17464 / G20) (Desulfovibrio alaskensis).